The primary structure comprises 525 residues: Membrane-bound lytic murein transglycosylase F (525 aa).

The signal sequence occupies residues 1-24 (MQIRHFNRLKRSVLLFASVLLLSA). The tract at residues 25 to 284 (CQIESQPKSE…SLEEKYIGHI (260 aa)) is non-LT domain. The interval 286–525 (AFDYVDTRAF…VDEDLDQEEE (240 aa)) is LT domain. Glutamate 329 is an active-site residue. The disordered stretch occupies residues 506–525 (VSGASDITNEVDEDLDQEEE). Over residues 514–525 (NEVDEDLDQEEE) the composition is skewed to acidic residues.

This sequence in the N-terminal section; belongs to the bacterial solute-binding protein 3 family. The protein in the C-terminal section; belongs to the transglycosylase Slt family.

It localises to the cell outer membrane. It catalyses the reaction Exolytic cleavage of the (1-&gt;4)-beta-glycosidic linkage between N-acetylmuramic acid (MurNAc) and N-acetylglucosamine (GlcNAc) residues in peptidoglycan, from either the reducing or the non-reducing ends of the peptidoglycan chains, with concomitant formation of a 1,6-anhydrobond in the MurNAc residue.. Functionally, murein-degrading enzyme that degrades murein glycan strands and insoluble, high-molecular weight murein sacculi, with the concomitant formation of a 1,6-anhydromuramoyl product. Lytic transglycosylases (LTs) play an integral role in the metabolism of the peptidoglycan (PG) sacculus. Their lytic action creates space within the PG sacculus to allow for its expansion as well as for the insertion of various structures such as secretion systems and flagella. In Vibrio parahaemolyticus serotype O3:K6 (strain RIMD 2210633), this protein is Membrane-bound lytic murein transglycosylase F.